Reading from the N-terminus, the 432-residue chain is 3-phosphoshikimate 1-carboxyvinyltransferase (432 aa).

3 residues coordinate 3-phosphoshikimate: Lys23, Ser24, and Arg28. Lys23 provides a ligand contact to phosphoenolpyruvate. Gly95 and Arg123 together coordinate phosphoenolpyruvate. 3-phosphoshikimate is bound by residues Ser167, Gln169, Asp317, and Lys344. Residue Gln169 participates in phosphoenolpyruvate binding. Catalysis depends on Asp317, which acts as the Proton acceptor. Phosphoenolpyruvate-binding residues include Arg348 and Arg390.

Belongs to the EPSP synthase family. Monomer.

The protein localises to the cytoplasm. It catalyses the reaction 3-phosphoshikimate + phosphoenolpyruvate = 5-O-(1-carboxyvinyl)-3-phosphoshikimate + phosphate. Its pathway is metabolic intermediate biosynthesis; chorismate biosynthesis; chorismate from D-erythrose 4-phosphate and phosphoenolpyruvate: step 6/7. Catalyzes the transfer of the enolpyruvyl moiety of phosphoenolpyruvate (PEP) to the 5-hydroxyl of shikimate-3-phosphate (S3P) to produce enolpyruvyl shikimate-3-phosphate and inorganic phosphate. This is 3-phosphoshikimate 1-carboxyvinyltransferase from Staphylococcus aureus (strain Newman).